The following is a 371-amino-acid chain: uncharacterized protein (371 aa).

The helical transmembrane segment at 17 to 33 (FLLFSVVLIIVMTTLVF) threads the bilayer.

To S.pombe SpBC4C3.08 and SpBC4C3.09.

Its subcellular location is the membrane. This is an uncharacterized protein from Schizosaccharomyces pombe (strain 972 / ATCC 24843) (Fission yeast).